The following is a 135-amino-acid chain: S-protein homolog 29 (135 aa).

The N-terminal stretch at 1–24 is a signal peptide; sequence MKNSSKIFVVLSIILFYVISSCHG. N110 carries an N-linked (GlcNAc...) asparagine glycan.

It belongs to the plant self-incompatibility (S1) protein family.

It localises to the secreted. This Arabidopsis thaliana (Mouse-ear cress) protein is S-protein homolog 29.